We begin with the raw amino-acid sequence, 296 residues long: Light-independent protochlorophyllide reductase iron-sulfur ATP-binding protein (296 aa).

Residues 39–44 (GIGKST) and Lys-68 contribute to the ATP site. Ser-43 provides a ligand contact to Mg(2+). Positions 124 and 158 each coordinate [4Fe-4S] cluster. ATP is bound at residue 209 to 210 (NR).

This sequence belongs to the NifH/BchL/ChlL family. As to quaternary structure, homodimer. Protochlorophyllide reductase is composed of three subunits; ChlL, ChlN and ChlB. It depends on [4Fe-4S] cluster as a cofactor.

The enzyme catalyses chlorophyllide a + oxidized 2[4Fe-4S]-[ferredoxin] + 2 ADP + 2 phosphate = protochlorophyllide a + reduced 2[4Fe-4S]-[ferredoxin] + 2 ATP + 2 H2O. It participates in porphyrin-containing compound metabolism; chlorophyll biosynthesis (light-independent). In terms of biological role, component of the dark-operative protochlorophyllide reductase (DPOR) that uses Mg-ATP and reduced ferredoxin to reduce ring D of protochlorophyllide (Pchlide) to form chlorophyllide a (Chlide). This reaction is light-independent. The L component serves as a unique electron donor to the NB-component of the complex, and binds Mg-ATP. The polypeptide is Light-independent protochlorophyllide reductase iron-sulfur ATP-binding protein (Prochlorococcus marinus (strain MIT 9313)).